Consider the following 355-residue polypeptide: Peptide chain release factor 1 (355 aa).

Glutamine 231 is modified (N5-methylglutamine).

Belongs to the prokaryotic/mitochondrial release factor family. Methylated by PrmC. Methylation increases the termination efficiency of RF1.

Its subcellular location is the cytoplasm. Its function is as follows. Peptide chain release factor 1 directs the termination of translation in response to the peptide chain termination codons UAG and UAA. The sequence is that of Peptide chain release factor 1 from Sulfurovum sp. (strain NBC37-1).